The primary structure comprises 882 residues: Valine--tRNA ligase (882 aa).

The 'HIGH' region signature appears at 45 to 55 (PNVTGKLHLGH). Positions 519–523 (KMSKS) match the 'KMSKS' region motif. Lys522 lines the ATP pocket. Residues 808-877 (LADLLNVEEE…DATQERIVEM (70 aa)) adopt a coiled-coil conformation.

It belongs to the class-I aminoacyl-tRNA synthetase family. ValS type 1 subfamily. As to quaternary structure, monomer.

It is found in the cytoplasm. It carries out the reaction tRNA(Val) + L-valine + ATP = L-valyl-tRNA(Val) + AMP + diphosphate. Its function is as follows. Catalyzes the attachment of valine to tRNA(Val). As ValRS can inadvertently accommodate and process structurally similar amino acids such as threonine, to avoid such errors, it has a 'posttransfer' editing activity that hydrolyzes mischarged Thr-tRNA(Val) in a tRNA-dependent manner. The polypeptide is Valine--tRNA ligase (Streptococcus pyogenes serotype M6 (strain ATCC BAA-946 / MGAS10394)).